The sequence spans 483 residues: Glutamyl-tRNA(Gln) amidotransferase subunit A (483 aa).

Active-site charge relay system residues include lysine 77 and serine 152. Serine 176 acts as the Acyl-ester intermediate in catalysis.

Belongs to the amidase family. GatA subfamily. Heterotrimer of A, B and C subunits.

It carries out the reaction L-glutamyl-tRNA(Gln) + L-glutamine + ATP + H2O = L-glutaminyl-tRNA(Gln) + L-glutamate + ADP + phosphate + H(+). Its function is as follows. Allows the formation of correctly charged Gln-tRNA(Gln) through the transamidation of misacylated Glu-tRNA(Gln) in organisms which lack glutaminyl-tRNA synthetase. The reaction takes place in the presence of glutamine and ATP through an activated gamma-phospho-Glu-tRNA(Gln). This is Glutamyl-tRNA(Gln) amidotransferase subunit A from Listeria monocytogenes serotype 4b (strain CLIP80459).